A 432-amino-acid chain; its full sequence is 3-phosphoshikimate 1-carboxyvinyltransferase (432 aa).

K21, S22, and R26 together coordinate 3-phosphoshikimate. K21 contributes to the phosphoenolpyruvate binding site. Phosphoenolpyruvate is bound by residues G94 and R122. 3-phosphoshikimate-binding residues include S168, Q170, D317, and K344. Q170 is a binding site for phosphoenolpyruvate. D317 functions as the Proton acceptor in the catalytic mechanism. Phosphoenolpyruvate-binding residues include R348 and R391.

This sequence belongs to the EPSP synthase family. Monomer.

The protein resides in the cytoplasm. It carries out the reaction 3-phosphoshikimate + phosphoenolpyruvate = 5-O-(1-carboxyvinyl)-3-phosphoshikimate + phosphate. Its pathway is metabolic intermediate biosynthesis; chorismate biosynthesis; chorismate from D-erythrose 4-phosphate and phosphoenolpyruvate: step 6/7. Catalyzes the transfer of the enolpyruvyl moiety of phosphoenolpyruvate (PEP) to the 5-hydroxyl of shikimate-3-phosphate (S3P) to produce enolpyruvyl shikimate-3-phosphate and inorganic phosphate. The chain is 3-phosphoshikimate 1-carboxyvinyltransferase from Petrotoga mobilis (strain DSM 10674 / SJ95).